The chain runs to 2462 residues: Serine/threonine-protein kinase Wnk (2462 aa).

3 disordered regions span residues 18 to 133 (NRAR…ASKS), 146 to 248 (NTLP…KSSS), and 365 to 461 (EDDV…DDDP). 2 stretches are compositionally biased toward polar residues: residues 29–58 (DGTT…NIQK) and 65–78 (NRSA…NPTS). The span at 94–124 (TLSAHTSTSSTTSIQSSPIEPASSLPTLNTT) shows a compositional bias: low complexity. Residues 146-155 (NTLPGKTASS) show a composition bias toward polar residues. Basic and acidic residues-rich tracts occupy residues 190-205 (QSRE…KIEP), 237-247 (DTKKMEARKSS), and 396-413 (QSEK…KAES). Low complexity predominate over residues 414–452 (SEASAEEAAVTGSSTDASASPLPSTSLVSTTSSATSITK). Residues 471 to 729 (FKYDKEVGRG…CNELLESEFF (259 aa)) form the Protein kinase domain. ATP contacts are provided by residues Ser481, 551-554 (TELM), and Lys601. Asp618 functions as the Proton acceptor in the catalytic mechanism. A phosphoserine; by autocatalysis mark is found at Ser628 and Ser632. 3 disordered regions span residues 844-873 (LQKQ…DGVK), 893-923 (LALS…QPVQ), and 1006-1055 (PQQQ…LQQQ). Residues 855–870 (VDEDEEEEEESEDEED) show a composition bias toward acidic residues. Positions 893–918 (LALSTNSVEPQQLSTRSNTSIPNSGI) are enriched in polar residues. 2 stretches are compositionally biased toward low complexity: residues 1006-1034 (PQQQ…QPQT) and 1041-1055 (HEQQ…LQQQ). The stretch at 1142-1178 (AQHQLQQLQQQQLQQQQLQQQQQIQQQQLQQQQLQQQ) forms a coiled coil. Residues 1236 to 1251 (QGGQVTLSDAQQQQHP) show a composition bias toward polar residues. 9 disordered regions span residues 1236-1256 (QGGQ…FSAV), 1322-1382 (QQQQ…EQIS), 1418-1465 (GALE…PKLS), 1554-1578 (LTRQ…SDIT), 1615-1699 (NIPN…KDKK), 1762-1790 (DTSE…GNQG), 1828-1895 (QASP…SVGS), 1929-1966 (HEKQ…SINQ), and 2122-2229 (THVQ…FIQS). Basic residues predominate over residues 1559-1568 (STFRSHQRHR). Positions 1627–1641 (STPPTTTSTMSSSST) are enriched in low complexity. Positions 1642 to 1674 (ASRDAPNSSNDVTIGSGSVSRKTSTASEYTSLS) are enriched in polar residues. Composition is skewed to polar residues over residues 1828–1852 (QASP…TKPN), 1861–1894 (SVGQ…NSVG), and 1943–1966 (SATS…SINQ). The span at 2125 to 2136 (QQPSNLQPQQQS) shows a compositional bias: low complexity. Over residues 2137-2160 (VHPNMTQQPQQTPLNGHPSMVNTL) the composition is skewed to polar residues. The segment covering 2161 to 2211 (QQQPPQQSLPMQTIQSQQQQHNQMPIISQQQQQQILMQQQQQQGSQQGSQQ) has biased composition (low complexity). Residues 2212-2229 (FNLPGTQQTHPQHQFIQS) are compositionally biased toward polar residues.

Belongs to the protein kinase superfamily. Ser/Thr protein kinase family. WNK subfamily. Mg(2+) is required as a cofactor. Post-translationally, autophosphorylated. Autophosphorylation at Ser-628 and Ser-632 promotes its activity.

Its subcellular location is the cytoplasm. It carries out the reaction L-seryl-[protein] + ATP = O-phospho-L-seryl-[protein] + ADP + H(+). It catalyses the reaction L-threonyl-[protein] + ATP = O-phospho-L-threonyl-[protein] + ADP + H(+). Activated in response to hyperosmotic stress: cell shrinkage promotes formation of a membraneless compartment that concentrates wnk-1 with its downstrem substrates. Activation requires autophosphorylation. Autophosphorylation and subsequent activation is inhibited by increases in intracellular Cl(-) or K(+). Serine/threonine-protein kinase component of the WNK-SPAK/OSR1 kinase cascade, which plays an important role in the regulation of electrolyte homeostasis and regulatory volume increase in response to hyperosmotic stress. Wnk mediates regulatory volume increase in response to hyperosmotic stress by acting as a molecular crowding sensor, which senses cell shrinkage and mediates formation of a membraneless compartment by undergoing liquid-liquid phase separation. The membraneless compartment concentrates Wnk with its substrate Fray, promoting Wnk-dependent phosphorylation and activation of downstream kinase Fray. Following activation, Fray catalyzes phosphorylation of ion cotransporters Ncc69 and Irk1, regulating their activity. Phosphorylation of Na-K-Cl cotransporter Ncc69 promotes its activation and ion influx. Involved in circadian rhythms in small ventral lateral (sLNv) pacemaker neurons: in the morning, Wnk activity is repressed by high levels of intracellular chloride; in contrast Wnk activation in the evening promotes the activation of the inwardly rectifying potassium channel Irk1 via Fray. Acts as a positive regulator of the canonical Wnt signaling pathway during wing disk development. The protein is Serine/threonine-protein kinase Wnk of Drosophila melanogaster (Fruit fly).